The following is a 247-amino-acid chain: Dof zinc finger protein DOF3.5 (247 aa).

The segment at 25 to 79 adopts a Dof-type zinc-finger fold; sequence PSCPRCGSSNTKFCYYNNYSLTQPRYFCKGCRRYWTKGGSLRNVPVGGGCRKSRR. Zn(2+) contacts are provided by cysteine 27, cysteine 30, cysteine 52, and cysteine 55. A disordered region spans residues 70–100; that stretch reads VGGGCRKSRRPKSSSGNNTKTSLTANSGNPG. Residues 82–94 are compositionally biased toward polar residues; the sequence is SSSGNNTKTSLTA.

The protein resides in the nucleus. Transcription factor that binds specifically to a 5'-AA[AG]G-3' consensus core sequence. This chain is Dof zinc finger protein DOF3.5 (DOF3.5), found in Arabidopsis thaliana (Mouse-ear cress).